A 964-amino-acid chain; its full sequence is Activator of stress genes 1 (964 aa).

A DNA-binding region (zn(2)-C6 fungal-type) is located at residues 21–47 (CDECRKKKVKCDGQQPCIHCTVYSYEC). The segment at 104–125 (ASTIPASNNPSKPRKYKTKSTR) is disordered. Position 166 is a phosphoserine; by ATM or ATR (serine 166). Serine 186 bears the Phosphoserine mark. Polar residues-rich tracts occupy residues 190 to 201 (PVLSSNSKNSTP), 209 to 225 (KSDSNSASSNREQDSVD), and 733 to 759 (NNTPISENPLNEAQQQDQVSQGTTNMS). Disordered regions lie at residues 190-225 (PVLSSNSKNSTPDEFLPNMKSDSNSASSNREQDSVD), 733-764 (NNTPISENPLNEAQQQDQVSQGTTNMSNERDP), and 800-900 (NSAF…SPSY). A compositionally biased stretch (low complexity) spans 800–896 (NSAFDFSSSK…NDFGIKIDNN (97 aa)). Residue serine 963 is modified to Phosphoserine.

The protein belongs to the ASG1 family.

Its subcellular location is the nucleus. Functionally, probable transcription factor involved in the stress response. This Saccharomyces cerevisiae (strain ATCC 204508 / S288c) (Baker's yeast) protein is Activator of stress genes 1 (ASG1).